We begin with the raw amino-acid sequence, 151 residues long: Small ribosomal subunit protein uS15 (151 aa).

Positions 1–20 are disordered; the sequence is MARLHSGKRGSSGSTRPLRT.

It belongs to the universal ribosomal protein uS15 family. In terms of assembly, part of the 30S ribosomal subunit.

This is Small ribosomal subunit protein uS15 from Methanococcus maripaludis (strain C5 / ATCC BAA-1333).